The chain runs to 349 residues: MDTIAARALTVMRVCATLQEARIVLEPNVMEILGIAINRYNGLTLRGVTMRPTSLAQRNEMFFMCLDMMVSAAGINVGPISPDYTQHMATIGVLATPEIPFTTEAANEIARVTGETSTWGPARQPYGFFLETEEVYQPGRWFMRAAQVVTPVVCGPNMVQVSLNAGAIGDVQQIFQGRNDPMMIYLVWRRIENFSMPQGNSQRTLAGVTVSVGGVDMRAGRIIAWDGQAVLQIHNPTQQNAMVQIQVVFYVSMDKTLNQYPALTAEIFNVYSFRDHTWHGLRTAILNRTTLPNMLPPIFPPNDRDSVLTILLLSTLADVYSVLRPEFAIHGVNPMPGPLTRAIARAAYA.

Residues asparagine 193 and asparagine 287 are each glycosylated (N-linked (GlcNAc...) asparagine; by host).

It belongs to the orbivirus VP7 family. In terms of assembly, homotrimer that assemble in a complex of 260 capsomers on an inner scaffold composed of VP3.

Its subcellular location is the virion. The VP7 protein is one of the five proteins (with VP1, VP3, VP4, and VP6) which form the inner capsid of the virus. In Antilocapra americana (Pronghorn), this protein is Core protein VP7 (Segment-7).